The chain runs to 1062 residues: Suppressor of mar1-1 protein (1062 aa).

A compositionally biased stretch (polar residues) spans 1–17; it reads MSENTTAPSDNITNEQR. Disordered regions lie at residues 1–27, 188–217, 267–337, 370–398, 595–634, and 681–804; these read MSEN…DDVD, ENSS…ASTS, TKQE…KKRT, SSKF…SATQ, EIST…QQEG, and SGEE…GNLG. The residue at position 2 (Ser-2) is an N-acetylserine. Low complexity predominate over residues 189–205; the sequence is NSSNNTSSQHNTSSSRR. Polar residues-rich tracts occupy residues 267-279, 287-298, and 305-323; these read TKQE…APSS, SLTSVPQRTNNE, and STAN…NNLI. The segment covering 325 to 335 has biased composition (basic residues); it reads IKRKRGRPPKK. Polar residues-rich tracts occupy residues 370 to 385 and 610 to 629; these read SSKF…NPVS and TKGS…GISD. Residues Ser-378, Ser-379, Ser-628, and Ser-681 each carry the phosphoserine modification. A compositionally biased stretch (basic and acidic residues) spans 685–699; that stretch reads AITKENAEYERKTPG. At Thr-697 the chain carries Phosphothreonine. The segment covering 704–716 has biased composition (polar residues); it reads TTFVPLENSQPSD. Ser-712 is subject to Phosphoserine; by ATM or ATR. Ser-738 is subject to Phosphoserine. Residues 781–793 are compositionally biased toward polar residues; it reads KGTSSIHNDTESA. Thr-817 carries the phosphothreonine modification.

As to quaternary structure, interacts with RFM1. This interaction is required to recruit HST1.

It is found in the nucleus. In terms of biological role, DNA-binding protein that specifically binds the regulatory region of middle sporulation genes (MSE). Required for the repression of middle sporulation genes during vegetative growth. Represses expression via the recruitment of histone deacetylase HST1. This is Suppressor of mar1-1 protein (SUM1) from Saccharomyces cerevisiae (strain ATCC 204508 / S288c) (Baker's yeast).